A 69-amino-acid polypeptide reads, in one-letter code: Guanine nucleotide-binding protein G(I)/G(S)/G(O) subunit gamma-T2 (69 aa).

Cysteine methyl ester is present on cysteine 66. Cysteine 66 is lipidated: S-farnesyl cysteine. A propeptide spans valine 67 to serine 69 (removed in mature form).

The protein belongs to the G protein gamma family. G proteins are composed of 3 units, alpha, beta and gamma.

The protein resides in the cell membrane. Functionally, guanine nucleotide-binding proteins (G proteins) are involved as a modulator or transducer in various transmembrane signaling systems. The beta and gamma chains are required for the GTPase activity, for replacement of GDP by GTP, and for G protein-effector interaction. In Mus musculus (Mouse), this protein is Guanine nucleotide-binding protein G(I)/G(S)/G(O) subunit gamma-T2 (Gngt2).